A 255-amino-acid chain; its full sequence is Zinc finger CCCH domain-containing protein 37 (255 aa).

2 C3H1-type zinc fingers span residues 98–128 (AYTGEPCPDFRRRPGAACPRGSTCPFAHGTF) and 137–159 (YRTRPCRAGVACRRRVCFFAHTA).

The protein is Zinc finger CCCH domain-containing protein 37 of Oryza sativa subsp. japonica (Rice).